The following is a 106-amino-acid chain: Large ribosomal subunit protein bL21 (106 aa).

Belongs to the bacterial ribosomal protein bL21 family. As to quaternary structure, part of the 50S ribosomal subunit. Contacts protein L20.

This protein binds to 23S rRNA in the presence of protein L20. The sequence is that of Large ribosomal subunit protein bL21 from Xanthomonas euvesicatoria pv. vesicatoria (strain 85-10) (Xanthomonas campestris pv. vesicatoria).